A 295-amino-acid polypeptide reads, in one-letter code: ATP synthase gamma chain (295 aa).

It belongs to the ATPase gamma chain family. In terms of assembly, F-type ATPases have 2 components, CF(1) - the catalytic core - and CF(0) - the membrane proton channel. CF(1) has five subunits: alpha(3), beta(3), gamma(1), delta(1), epsilon(1). CF(0) has three main subunits: a, b and c.

It is found in the cell inner membrane. Functionally, produces ATP from ADP in the presence of a proton gradient across the membrane. The gamma chain is believed to be important in regulating ATPase activity and the flow of protons through the CF(0) complex. This Campylobacter concisus (strain 13826) protein is ATP synthase gamma chain.